The following is a 179-amino-acid chain: Pectinesterase inhibitor 5 (179 aa).

The first 25 residues, 1 to 25 (MATMLINHMLFLTSLLIVVFPVANA), serve as a signal peptide directing secretion. 2 disulfide bridges follow: Cys35/Cys44 and Cys101/Cys141.

This sequence belongs to the PMEI family. Expressed in seeds, buds, and mature flowers.

It localises to the secreted. Its subcellular location is the extracellular space. The protein resides in the apoplast. Functionally, pectin methylesterase (PME) inhibitor that targets PME from seeds and modulates PME activity and pectin methylesterification during seed germination. The sequence is that of Pectinesterase inhibitor 5 from Arabidopsis thaliana (Mouse-ear cress).